Consider the following 322-residue polypeptide: Glucokinase (322 aa).

Position 10 to 15 (Gly-10 to Thr-15) interacts with ATP.

This sequence belongs to the bacterial glucokinase family.

It is found in the cytoplasm. The catalysed reaction is D-glucose + ATP = D-glucose 6-phosphate + ADP + H(+). The chain is Glucokinase from Hahella chejuensis (strain KCTC 2396).